The following is a 719-amino-acid chain: Potassium channel KOR2 (719 aa).

The Cytoplasmic segment spans residues 1-63; the sequence is MAEEYELNEI…VIHPNGRWYR (63 aa). Residues 64-84 form a helical membrane-spanning segment; sequence IWANMMFLWSIYSTFFTPFEF. Over 85–93 the chain is Extracellular; the sequence is SFFRGLPDQ. The chain crosses the membrane as a helical span at residues 94–114; that stretch reads LLDLECVQLVFLADVAVHFFL. Over 115-137 the chain is Cytoplasmic; the sequence is AYRDPHTYRMVHDKRHIALRYIK. The chain crosses the membrane as a helical span at residues 138–158; it reads GSFALDVLGCFPWDAIYKVTG. Residues 159–164 are Extracellular-facing; it reads RVEAVR. The chain crosses the membrane as a helical; Voltage-sensor span at residues 165–185; that stretch reads WLVWVRLYRGRKVMAFFKRVE. At 186-199 the chain is on the cytoplasmic side; the sequence is KDIRVSYLLTRIVK. Residues 200-220 form a helical membrane-spanning segment; the sequence is LITVELYCTHTAACGFYYLAT. Over 221–255 the chain is Extracellular; the sequence is TLPPAREGGTWIGSLSLGDARYINFREVDLLTRYV. Positions 256 to 275 form an intramembrane region, pore-forming; sequence TSLYLAIVTMATVGYGDIHA. Residues 276 to 285 are Extracellular-facing; it reads VNTREMAFTV. Residues 286–306 form a helical membrane-spanning segment; that stretch reads VYISFSIVLSAYLIGNMTALI. The Cytoplasmic portion of the chain corresponds to 307–719; that stretch reads VKGSRTERFR…LEQARTVATN (413 aa). 383–503 contacts a nucleoside 3',5'-cyclic phosphate; that stretch reads LFRGCSDDFL…SQILSNLLKG (121 aa). 5 ANK repeats span residues 523–556, 560–589, 593–622, 624–653, and 657–686; these read KQES…DPSK, DGRT…NVNS, FGNS…ILNL, DAGG…SPNC, and DQRT…DIQA.

It belongs to the potassium channel family. Plant (TC 1.A.1.4) subfamily.

It is found in the membrane. Probable outward-rectifying potassium channel. This Oryza sativa subsp. japonica (Rice) protein is Potassium channel KOR2.